Reading from the N-terminus, the 67-residue chain is Small ribosomal subunit protein eS17 (67 aa).

The protein belongs to the eukaryotic ribosomal protein eS17 family.

This is Small ribosomal subunit protein eS17 from Pyrococcus abyssi (strain GE5 / Orsay).